We begin with the raw amino-acid sequence, 328 residues long: Protein-glutamine deamidase Cif (328 aa).

Positions 1-68 (MLEHGVMKIP…TNRTGENPMI (68 aa)) are disordered. Residues 52 to 63 (RSSSISNTNRTG) show a composition bias toward polar residues. Active-site residues include cysteine 156, histidine 211, and glutamine 231.

This sequence belongs to the Cif family.

The protein localises to the secreted. The protein resides in the host nucleus. The catalysed reaction is L-glutaminyl-[protein] + H2O = L-glutamyl-[protein] + NH4(+). Its function is as follows. Protein-glutamine deamidase effector that inhibits the host cell cycle and other key cellular processes such as the actin network and programmed-cell death. Acts by mediating the side chain deamidation of 'Gln-40' of host NEDD8, converting it to glutamate, thereby abolishing the activity of cullin-RING-based E3 ubiquitin-protein ligase complexes (CRL complexes). Inactivation of CRL complexes prevents ubiquitination and subsequent degradation of the cyclin-dependent kinase inhibitors CDKN1A/p21 and CDKN1B/p27, leading to G1 and G2 cell cycle arrests in host cells. Deamidation of 'Gln-40' of host NEDD8 also triggers macrophage-specific programmed cell death. Also able to catalyze deamidation of 'Gln-40' of host ubiquitin in vitro; however, NEDD8 constitutes the preferred substrate in vivo. Also regulates the host NF-kappa-B signaling via activation of MAPK/ERK cascade: activation of host MAPK/ERK cascade is independent of CRL complexes inhibition, suggesting that Cif has other host protein targets than NEDD8. The sequence is that of Protein-glutamine deamidase Cif from Burkholderia pseudomallei (strain K96243).